The primary structure comprises 202 residues: CASP-like protein 2B2 (202 aa).

Topologically, residues 1–29 (MSYLGVGVSPGNVPVYHGMNLKVIDRRVR) are cytoplasmic. Residues 30 to 50 (LAELVLRCVICALGVLAAVLV) traverse the membrane as a helical segment. The Extracellular portion of the chain corresponds to 51–72 (GTDTQVKEIFSIQKKARFTDMK). Residues 73–93 (ALVFLVVANGIAAAYSLVQGV) traverse the membrane as a helical segment. Topologically, residues 94-118 (RCVVGMVKGSVLFSKPLAWVIFSGD) are cytoplasmic. A helical membrane pass occupies residues 119–139 (QMMAYLTLSAVAAAVQSASFA). At 140 to 164 (KLGQPDLQWMKICNMYGKFCNQVGE) the chain is on the extracellular side. Residues 165–185 (GIASALLVSVSMVVLSCISSF) traverse the membrane as a helical segment. Over 186 to 202 (SLFRLYGGNKGKDGARW) the chain is Cytoplasmic.

It belongs to the Casparian strip membrane proteins (CASP) family. Homodimer and heterodimers.

The protein localises to the cell membrane. The sequence is that of CASP-like protein 2B2 from Populus trichocarpa (Western balsam poplar).